A 225-amino-acid chain; its full sequence is Peptidyl-tRNA hydrolase (225 aa).

Tyrosine 27 is a binding site for tRNA. Histidine 32 acts as the Proton acceptor in catalysis. TRNA-binding residues include tyrosine 78, asparagine 80, and asparagine 126. Positions 198-225 (FNPLDFSGPDRQDQPAPLNPAKTAPGES) are disordered.

Belongs to the PTH family. As to quaternary structure, monomer.

The protein localises to the cytoplasm. The catalysed reaction is an N-acyl-L-alpha-aminoacyl-tRNA + H2O = an N-acyl-L-amino acid + a tRNA + H(+). Functionally, hydrolyzes ribosome-free peptidyl-tRNAs (with 1 or more amino acids incorporated), which drop off the ribosome during protein synthesis, or as a result of ribosome stalling. In terms of biological role, catalyzes the release of premature peptidyl moieties from peptidyl-tRNA molecules trapped in stalled 50S ribosomal subunits, and thus maintains levels of free tRNAs and 50S ribosomes. The polypeptide is Peptidyl-tRNA hydrolase (Synechococcus sp. (strain JA-3-3Ab) (Cyanobacteria bacterium Yellowstone A-Prime)).